Reading from the N-terminus, the 256-residue chain is Major prion protein (256 aa).

Positions 1-24 (MVKSHIGSWILVLFVAMWSDVGLC) are cleaved as a signal peptide. An interaction with GRB2, ERI3 and SYN1 region spans residues 25 to 233 (KKRPKPGGGW…ESQAYYQRGA (209 aa)). A disordered region spans residues 28–110 (PKPGGGWNTG…QWNKPSKPKT (83 aa)). A run of 5 repeats spans residues 54–62 (PQGGGGWGQ), 63–70 (PHGGGWGQ), 71–78 (PHGGGWGQ), 79–86 (PHGGGWGQ), and 87–95 (PHGGGGWGQ). Residues 54–95 (PQGGGGWGQPHGGGWGQPHGGGWGQPHGGGWGQPHGGGGWGQ) form a 5 X 8 AA tandem repeats of P-H-G-G-G-W-G-Q region. Over residues 55–97 (QGGGGWGQPHGGGWGQPHGGGWGQPHGGGWGQPHGGGGWGQGG) the composition is skewed to gly residues. Positions 64, 65, 66, 72, 73, 74, 80, 81, 82, 88, 90, and 91 each coordinate Cu(2+). C182 and C217 are disulfide-bonded. N184 and N200 each carry an N-linked (GlcNAc...) asparagine glycan. A233 is lipidated: GPI-anchor amidated alanine. The propeptide at 234–256 (SVILFSPPPVILLISFLIFLIVG) is removed in mature form.

It belongs to the prion family. In terms of assembly, monomer and homodimer. Has a tendency to aggregate into amyloid fibrils containing a cross-beta spine, formed by a steric zipper of superposed beta-strands. Soluble oligomers may represent an intermediate stage on the path to fibril formation. Copper binding may promote oligomerization. Interacts with GRB2, APP, ERI3/PRNPIP and SYN1. Mislocalized cytosolically exposed PrP interacts with MGRN1; this interaction alters MGRN1 subcellular location and causes lysosomal enlargement. Interacts with KIAA1191.

Its subcellular location is the cell membrane. The protein localises to the golgi apparatus. Its function is as follows. Its primary physiological function is unclear. Has cytoprotective activity against internal or environmental stresses. May play a role in neuronal development and synaptic plasticity. May be required for neuronal myelin sheath maintenance. May play a role in iron uptake and iron homeostasis. Soluble oligomers are toxic to cultured neuroblastoma cells and induce apoptosis (in vitro). Association with GPC1 (via its heparan sulfate chains) targets PRNP to lipid rafts. Also provides Cu(2+) or Zn(2+) for the ascorbate-mediated GPC1 deaminase degradation of its heparan sulfate side chains. The polypeptide is Major prion protein (PRNP) (Capra hircus (Goat)).